A 124-amino-acid chain; its full sequence is Kinocilin (124 aa).

2 consecutive transmembrane segments (helical) span residues 13–33 (LQLACVALGLVAGSIIIGVSV) and 40–60 (VGGIFLGAAGLGLLIFAYPFL). A disordered region spans residues 80-124 (PNSGPDHGEGRSSNNSNKEGARSGLSTVTRTLEKLKPGGRGTEEG). A compositionally biased stretch (polar residues) spans 90-109 (RSSNNSNKEGARSGLSTVTR). The segment covering 110–124 (TLEKLKPGGRGTEEG) has biased composition (basic and acidic residues).

As to expression, preferentially expressed in the inner ear and testis. Localizes mainly in the kinocilium of sensory cells in the inner ear. Also present in the manchette of the spermatids, a transient structure enriched in interconnected microtubules (at protein level).

It is found in the membrane. May play a role in stabilizing dense microtubular networks or in vesicular trafficking. The chain is Kinocilin (Kncn) from Mus musculus (Mouse).